Consider the following 320-residue polypeptide: Adhesin MafA 1/4 (320 aa).

Positions 1–18 (MRARLLIPILFSVFILSA) are cleaved as a signal peptide. Residue cysteine 19 is the site of N-palmitoyl cysteine attachment. A lipid anchor (S-diacylglycerol cysteine) is attached at cysteine 19. The disordered stretch occupies residues 287 to 320 (NHTGNSAPSVEADNSHEGYGYSDEAVRQHRQGQP).

The protein belongs to the MafA family.

It is found in the cell outer membrane. This is Adhesin MafA 1/4 (mafA1) from Neisseria gonorrhoeae (strain ATCC 700825 / FA 1090).